The primary structure comprises 527 residues: Peptide chain release factor 3 (527 aa).

Positions 9 to 277 constitute a tr-type G domain; that stretch reads AKRRTFAIIS…AVVNWAPKPL (269 aa). GTP is bound by residues 18–25, 86–90, and 140–143; these read SHPDAGKT, DTPGH, and NKLD.

Belongs to the TRAFAC class translation factor GTPase superfamily. Classic translation factor GTPase family. PrfC subfamily.

The protein localises to the cytoplasm. Its function is as follows. Increases the formation of ribosomal termination complexes and stimulates activities of RF-1 and RF-2. It binds guanine nucleotides and has strong preference for UGA stop codons. It may interact directly with the ribosome. The stimulation of RF-1 and RF-2 is significantly reduced by GTP and GDP, but not by GMP. The sequence is that of Peptide chain release factor 3 from Pseudomonas syringae pv. syringae (strain B728a).